The sequence spans 162 residues: Balbiani ring protein 2 (162 aa).

The last constant region stretch occupies residues 1–31 (CDDAMRKTESDKCTNIGGKFDPSTCKCTPET). Residues 32–51 (VTEGPTTCLESSESDEVTTK) are last Cys-1 repeat. Residues 52–162 (KPCDCTCAPD…VKGLEDILNS (111 aa)) form a unique region region.

Salivary gland.

It localises to the secreted. In terms of biological role, used by the larvae to construct a supramolecular structure, the larval tube. The sequence is that of Balbiani ring protein 2 (BR2) from Chironomus pallidivittatus (Midge).